We begin with the raw amino-acid sequence, 416 residues long: Histidine--tRNA ligase (416 aa).

This sequence belongs to the class-II aminoacyl-tRNA synthetase family. In terms of assembly, homodimer.

The protein localises to the cytoplasm. It carries out the reaction tRNA(His) + L-histidine + ATP = L-histidyl-tRNA(His) + AMP + diphosphate + H(+). The sequence is that of Histidine--tRNA ligase from Clostridium kluyveri (strain NBRC 12016).